We begin with the raw amino-acid sequence, 515 residues long: 2,3-bisphosphoglycerate-independent phosphoglycerate mutase (515 aa).

Positions 17 and 67 each coordinate Mn(2+). Residue serine 67 is the Phosphoserine intermediate of the active site. Residues histidine 128, 157-158, arginine 190, arginine 196, 262-265, and lysine 336 each bind substrate; these read RD and RADR. The Mn(2+) site is built by aspartate 403, histidine 407, aspartate 444, histidine 445, and histidine 463.

It belongs to the BPG-independent phosphoglycerate mutase family. As to quaternary structure, monomer. It depends on Mn(2+) as a cofactor.

It carries out the reaction (2R)-2-phosphoglycerate = (2R)-3-phosphoglycerate. Its pathway is carbohydrate degradation; glycolysis; pyruvate from D-glyceraldehyde 3-phosphate: step 3/5. Catalyzes the interconversion of 2-phosphoglycerate and 3-phosphoglycerate. The protein is 2,3-bisphosphoglycerate-independent phosphoglycerate mutase of Acinetobacter baylyi (strain ATCC 33305 / BD413 / ADP1).